The following is a 391-amino-acid chain: Suppressor APC domain-containing protein 2 (391 aa).

The disordered stretch occupies residues 1–20; that stretch reads MAVAAMAERGRLSHAAPAPS. Thr218 is subject to Phosphothreonine. Positions 226–277 form a coiled coil; the sequence is SLLKQMKELDQEQEVLLQGLEMMARGRDWYQQQLQRVQERQRRLSQSRAAAD. The residue at position 283 (Ser283) is a Phosphoserine. Residues 340 to 381 are a coiled coil; it reads LKEQNRLLTQEVTDKSERITQLEQEKSALIKQLFEARALSQQ.

Interacts with a spindle orientation complex at least composed of GNAI1, GPSM2 and NUMA1. Interacts with GPSM2 (via TPR motifs); this interaction is required to prevent GPSM2 anchoring at the mitotic apical cortex and is inhibited in presence of NUMA1 in a dose dependent manner. Interacts with PARD3. As to expression, expressed in the retina. Expressed in retinal progenitor cells and newly differentiated neurons but not in mature retinal cells (at protein level).

Its subcellular location is the cytoplasm. It is found in the nucleus. It localises to the cell cortex. The protein resides in the apical cell membrane. The protein localises to the cell junction. Its subcellular location is the tight junction. Functionally, plays a role in planar mitotic spindle orientation in retinal progenitor cells (RPCs) and promotes the production of symmetric terminal divisions. Negatively regulates the mitotic apical cortex localization of GPSM2. Involved also in positive regulation of cell proliferation and tumor cell growth. The chain is Suppressor APC domain-containing protein 2 from Mus musculus (Mouse).